Consider the following 335-residue polypeptide: ATP-dependent 6-phosphofructokinase (335 aa).

ATP is bound at residue glycine 11. 21–25 is a binding site for ADP; sequence RAVVR. ATP is bound by residues 72–73 and 102–105; these read RY and GDGS. Residue aspartate 103 participates in Mg(2+) binding. Residue 125–127 participates in substrate binding; it reads TID. Aspartate 127 (proton acceptor) is an active-site residue. Arginine 154 is a binding site for ADP. Substrate contacts are provided by residues arginine 162 and 169-171; that span reads MGR. Residues 185-187 and 213-215 contribute to the ADP site; these read GAD and KKH. Substrate-binding positions include glutamate 222, arginine 244, and 250–253; that span reads HIQR.

Belongs to the phosphofructokinase type A (PFKA) family. ATP-dependent PFK group I subfamily. Prokaryotic clade 'B1' sub-subfamily. As to quaternary structure, homotetramer. Mg(2+) is required as a cofactor.

Its subcellular location is the cytoplasm. It catalyses the reaction beta-D-fructose 6-phosphate + ATP = beta-D-fructose 1,6-bisphosphate + ADP + H(+). The protein operates within carbohydrate degradation; glycolysis; D-glyceraldehyde 3-phosphate and glycerone phosphate from D-glucose: step 3/4. Allosterically activated by ADP and other diphosphonucleosides, and allosterically inhibited by phosphoenolpyruvate. Catalyzes the phosphorylation of D-fructose 6-phosphate to fructose 1,6-bisphosphate by ATP, the first committing step of glycolysis. The sequence is that of ATP-dependent 6-phosphofructokinase from Streptococcus pneumoniae serotype 19F (strain G54).